Consider the following 398-residue polypeptide: Riboflavin biosynthesis protein RibBA (398 aa).

The tract at residues 1 to 199 (MFHPIEEALE…IKDLIEYRYN (199 aa)) is DHBP synthase. D-ribulose 5-phosphate-binding positions include 26–27 (RE), Asp31, 138–142 (RAGHT), and Glu162. Glu27 contacts Mg(2+). Residue His141 coordinates Mg(2+). Residues 200–398 (ITTLVNREVD…MKKLGHLLHF (199 aa)) form a GTP cyclohydrolase II region. A GTP-binding site is contributed by 251 to 255 (RVHSE). Zn(2+) contacts are provided by Cys256, Cys267, and Cys269. GTP-binding positions include Gln272, 294–296 (EGR), and Thr316. The active-site Proton acceptor; for GTP cyclohydrolase activity is the Asp328. The active-site Nucleophile; for GTP cyclohydrolase activity is Arg330. 2 residues coordinate GTP: Thr351 and Lys356.

It in the N-terminal section; belongs to the DHBP synthase family. This sequence in the C-terminal section; belongs to the GTP cyclohydrolase II family. Requires Mg(2+) as cofactor. Mn(2+) serves as cofactor. Zn(2+) is required as a cofactor.

The catalysed reaction is D-ribulose 5-phosphate = (2S)-2-hydroxy-3-oxobutyl phosphate + formate + H(+). It catalyses the reaction GTP + 4 H2O = 2,5-diamino-6-hydroxy-4-(5-phosphoribosylamino)-pyrimidine + formate + 2 phosphate + 3 H(+). Its pathway is cofactor biosynthesis; riboflavin biosynthesis; 2-hydroxy-3-oxobutyl phosphate from D-ribulose 5-phosphate: step 1/1. The protein operates within cofactor biosynthesis; riboflavin biosynthesis; 5-amino-6-(D-ribitylamino)uracil from GTP: step 1/4. Catalyzes the conversion of D-ribulose 5-phosphate to formate and 3,4-dihydroxy-2-butanone 4-phosphate. Functionally, catalyzes the conversion of GTP to 2,5-diamino-6-ribosylamino-4(3H)-pyrimidinone 5'-phosphate (DARP), formate and pyrophosphate. The protein is Riboflavin biosynthesis protein RibBA of Bacillus velezensis (strain DSM 23117 / BGSC 10A6 / LMG 26770 / FZB42) (Bacillus amyloliquefaciens subsp. plantarum).